The following is a 373-amino-acid chain: Ribonuclease D (373 aa).

The 169-residue stretch at 3 to 171 (YQLITTDAGL…MAKRLVQETE (169 aa)) folds into the 3'-5' exonuclease domain. Residues 210 to 289 (RPRQLGCLQK…AEAAELEESA (80 aa)) form the HRDC domain.

Belongs to the RNase D family. A divalent metal cation serves as cofactor.

It localises to the cytoplasm. It carries out the reaction Exonucleolytic cleavage that removes extra residues from the 3'-terminus of tRNA to produce 5'-mononucleotides.. Its function is as follows. Exonuclease involved in the 3' processing of various precursor tRNAs. Initiates hydrolysis at the 3'-terminus of an RNA molecule and releases 5'-mononucleotides. This Serratia proteamaculans (strain 568) protein is Ribonuclease D.